The sequence spans 415 residues: Exodeoxyribonuclease 7 large subunit (415 aa).

The protein belongs to the XseA family. In terms of assembly, heterooligomer composed of large and small subunits.

It localises to the cytoplasm. The enzyme catalyses Exonucleolytic cleavage in either 5'- to 3'- or 3'- to 5'-direction to yield nucleoside 5'-phosphates.. In terms of biological role, bidirectionally degrades single-stranded DNA into large acid-insoluble oligonucleotides, which are then degraded further into small acid-soluble oligonucleotides. The chain is Exodeoxyribonuclease 7 large subunit from Mycobacterium bovis (strain ATCC BAA-935 / AF2122/97).